The sequence spans 160 residues: Large ribosomal subunit protein uL11 (160 aa).

The protein belongs to the universal ribosomal protein uL11 family. As to quaternary structure, part of the ribosomal stalk of the 50S ribosomal subunit. Interacts with L10 and the large rRNA to form the base of the stalk. L10 forms an elongated spine to which L12 dimers bind in a sequential fashion forming a multimeric L10(L12)X complex.

Forms part of the ribosomal stalk which helps the ribosome interact with GTP-bound translation factors. The chain is Large ribosomal subunit protein uL11 from Methanothermobacter thermautotrophicus (strain ATCC 29096 / DSM 1053 / JCM 10044 / NBRC 100330 / Delta H) (Methanobacterium thermoautotrophicum).